The primary structure comprises 547 residues: Cilia- and flagella- associated protein 210 (547 aa).

Residues 184–254 (KLNVEKAFKE…EIEMKKKQGK (71 aa)) are a coiled coil. Residues 210-237 (KDHLKQIKEHEEEEERRRKEEEKDAEEI) form a disordered region.

Microtubule inner protein component of sperm flagellar doublet microtubules. Expressed in trachea multiciliated cells.

The protein localises to the cytoplasm. The protein resides in the cytoskeleton. It is found in the cilium axoneme. It localises to the flagellum axoneme. Microtubule inner protein (MIP) part of the dynein-decorated doublet microtubules (DMTs) in cilia axoneme, which is required for motile cilia beating. The chain is Cilia- and flagella- associated protein 210 (CFAP210) from Bos taurus (Bovine).